Consider the following 280-residue polypeptide: Acetyl-coenzyme A carboxylase carboxyl transferase subunit beta (280 aa).

In terms of domain architecture, CoA carboxyltransferase N-terminal spans 28-280 (IMTKCPSCRT…TLTKLLAMHQ (253 aa)). The Zn(2+) site is built by Cys-32, Cys-35, Cys-51, and Cys-54. Residues 32 to 54 (CPSCRTIMYTKDLKKNLSVCRTC) form a C4-type zinc finger.

Belongs to the AccD/PCCB family. As to quaternary structure, acetyl-CoA carboxylase is a heterohexamer composed of biotin carboxyl carrier protein (AccB), biotin carboxylase (AccC) and two subunits each of ACCase subunit alpha (AccA) and ACCase subunit beta (AccD). Zn(2+) is required as a cofactor.

The protein localises to the cytoplasm. It catalyses the reaction N(6)-carboxybiotinyl-L-lysyl-[protein] + acetyl-CoA = N(6)-biotinyl-L-lysyl-[protein] + malonyl-CoA. It participates in lipid metabolism; malonyl-CoA biosynthesis; malonyl-CoA from acetyl-CoA: step 1/1. Component of the acetyl coenzyme A carboxylase (ACC) complex. Biotin carboxylase (BC) catalyzes the carboxylation of biotin on its carrier protein (BCCP) and then the CO(2) group is transferred by the transcarboxylase to acetyl-CoA to form malonyl-CoA. This chain is Acetyl-coenzyme A carboxylase carboxyl transferase subunit beta, found in Shouchella clausii (strain KSM-K16) (Alkalihalobacillus clausii).